The following is a 78-amino-acid chain: Major outer membrane lipoprotein Lpp (78 aa).

The signal sequence occupies residues 1–20 (MKATKLVLGAVILGSTLLAG). A lipid anchor (N-palmitoyl cysteine) is attached at Cys-21. Residue Cys-21 is the site of S-diacylglycerol cysteine attachment. 2 consecutive repeats follow at residues 24-34 (NAKIDQLSSDV) and 38-48 (NAKVDQLSNDV). The stretch at 27 to 75 (IDQLSSDVQTLNAKVDQLSNDVNAMRSDVQAAKDDAARANQRLDNMATK) forms a coiled coil. N6-murein peptidoglycan lysine is present on Lys-78.

This sequence belongs to the Lpp family. In terms of assembly, homotrimer.

The protein localises to the cell outer membrane. The protein resides in the secreted. It is found in the cell wall. Functionally, a highly abundant outer membrane lipoprotein that controls the distance between the inner and outer membranes. The only protein known to be covalently linked to the peptidoglycan network (PGN). Also non-covalently binds the PGN. The link between the cell outer membrane and PGN contributes to maintenance of the structural and functional integrity of the cell envelope, and maintains the correct distance between the PGN and the outer membrane. This Shigella flexneri protein is Major outer membrane lipoprotein Lpp.